The primary structure comprises 242 residues: Probable 2-phosphosulfolactate phosphatase (242 aa).

The protein belongs to the ComB family. The cofactor is Mg(2+).

It carries out the reaction (2R)-O-phospho-3-sulfolactate + H2O = (2R)-3-sulfolactate + phosphate. The protein is Probable 2-phosphosulfolactate phosphatase of Synechococcus sp. (strain JA-3-3Ab) (Cyanobacteria bacterium Yellowstone A-Prime).